The sequence spans 475 residues: Aspartyl/glutamyl-tRNA(Asn/Gln) amidotransferase subunit B (475 aa).

Belongs to the GatB/GatE family. GatB subfamily. Heterotrimer of A, B and C subunits.

The enzyme catalyses L-glutamyl-tRNA(Gln) + L-glutamine + ATP + H2O = L-glutaminyl-tRNA(Gln) + L-glutamate + ADP + phosphate + H(+). It carries out the reaction L-aspartyl-tRNA(Asn) + L-glutamine + ATP + H2O = L-asparaginyl-tRNA(Asn) + L-glutamate + ADP + phosphate + 2 H(+). Allows the formation of correctly charged Asn-tRNA(Asn) or Gln-tRNA(Gln) through the transamidation of misacylated Asp-tRNA(Asn) or Glu-tRNA(Gln) in organisms which lack either or both of asparaginyl-tRNA or glutaminyl-tRNA synthetases. The reaction takes place in the presence of glutamine and ATP through an activated phospho-Asp-tRNA(Asn) or phospho-Glu-tRNA(Gln). The protein is Aspartyl/glutamyl-tRNA(Asn/Gln) amidotransferase subunit B of Hydrogenovibrio crunogenus (strain DSM 25203 / XCL-2) (Thiomicrospira crunogena).